A 322-amino-acid chain; its full sequence is Cytochrome c biogenesis protein CcsA (322 aa).

The next 8 helical transmembrane spans lie at 6 to 26 (LQLI…FLFF), 45 to 65 (LIAN…AGYF), 69 to 89 (NLYE…LFLY), 97 to 117 (LLDN…HFIL), 144 to 164 (MISY…LYFL), 230 to 250 (LITF…VWAN), 265 to 285 (WALI…IKGW), and 291 to 311 (AMVA…VNLL).

The protein belongs to the CcmF/CycK/Ccl1/NrfE/CcsA family. May interact with Ccs1.

Its subcellular location is the plastid. It localises to the cyanelle thylakoid membrane. Required during biogenesis of c-type cytochromes (cytochrome c6 and cytochrome f) at the step of heme attachment. This chain is Cytochrome c biogenesis protein CcsA, found in Cyanophora paradoxa.